A 198-amino-acid chain; its full sequence is Ribonuclease HII (198 aa).

Residues 11 to 198 (NLIAGVDEVG…GPVKRVLGLV (188 aa)) form the RNase H type-2 domain. 3 residues coordinate a divalent metal cation: D17, E18, and D109.

The protein belongs to the RNase HII family. It depends on Mn(2+) as a cofactor. Requires Mg(2+) as cofactor.

The protein localises to the cytoplasm. It carries out the reaction Endonucleolytic cleavage to 5'-phosphomonoester.. Its function is as follows. Endonuclease that specifically degrades the RNA of RNA-DNA hybrids. The polypeptide is Ribonuclease HII (Yersinia pseudotuberculosis serotype O:3 (strain YPIII)).